Consider the following 891-residue polypeptide: DNA mismatch repair protein MutS (891 aa).

634 to 641 contributes to the ATP binding site; the sequence is GPNMGGKS.

It belongs to the DNA mismatch repair MutS family.

This protein is involved in the repair of mismatches in DNA. It is possible that it carries out the mismatch recognition step. This protein has a weak ATPase activity. The sequence is that of DNA mismatch repair protein MutS from Burkholderia pseudomallei (strain 1106a).